A 517-amino-acid polypeptide reads, in one-letter code: Serine hydroxymethyltransferase 2, mitochondrial (517 aa).

The transit peptide at Met-1 to Met-29 directs the protein to the mitochondrion. L-serine is bound at residue Ser-82. Pemetrexed contacts are provided by residues Ser-82, Tyr-102, Glu-104, Tyr-112, Ser-148–Ser-150, and His-177. Residues Glu-104 and Tyr-112 each contribute to the L-serine site. Glu-104 contacts methotrexate. Thr-184–Thr-186 is a binding site for methotrexate. Residues Ser-232 and His-260 each contribute to the pemetrexed site. His-260 and Lys-286 together coordinate L-serine. Lys-286 is modified (N6-(pyridoxal phosphate)lysine). Residue Gly-331 participates in pemetrexed binding. Position 414 (Lys-414) interacts with methotrexate. L-serine is bound at residue Arg-430. A pemetrexed-binding site is contributed by Arg-430.

It belongs to the SHMT family. As to quaternary structure, homotetramer. It depends on pyridoxal 5'-phosphate as a cofactor. As to expression, ubiquitous. Mainly expressed in the shoot apical meristem and roots. Also detected in the leaf vasculature, especially in the protoxylem and adjacent cell layers.

It localises to the mitochondrion. The catalysed reaction is (6R)-5,10-methylene-5,6,7,8-tetrahydrofolate + glycine + H2O = (6S)-5,6,7,8-tetrahydrofolate + L-serine. It functions in the pathway one-carbon metabolism; tetrahydrofolate interconversion. With respect to regulation, inhibited by the antifolate drugs methotrexate and pemetrexed. Functionally, functions outside the photorespiratory pathway in catalyzing the interconversion of serine and glycine with the conversion of tetrahydrofolate (THF) into 5,10-methylene-THF. This Arabidopsis thaliana (Mouse-ear cress) protein is Serine hydroxymethyltransferase 2, mitochondrial.